Reading from the N-terminus, the 398-residue chain is ATP-dependent (S)-NAD(P)H-hydrate dehydratase 1 (398 aa).

Residues 80 to 391 enclose the YjeF C-terminal domain; it reads LLRKAFQMIP…GYIGEAFELV (312 aa). Residues Gly-187 and 240–246 contribute to the (6S)-NADPHX site; that span reads NHVEFQR. ATP-binding positions include 280 to 284 and 300 to 309; these read KGSID and GSPKRCGGQG. Asp-310 is a binding site for (6S)-NADPHX.

Belongs to the NnrD/CARKD family. Requires Mg(2+) as cofactor.

The protein resides in the cytoplasm. The enzyme catalyses (6S)-NADHX + ATP = ADP + phosphate + NADH + H(+). The catalysed reaction is (6S)-NADPHX + ATP = ADP + phosphate + NADPH + H(+). Functionally, catalyzes the dehydration of the S-form of NAD(P)HX at the expense of ATP, which is converted to ADP. Together with NAD(P)HX epimerase, which catalyzes the epimerization of the S- and R-forms, the enzyme allows the repair of both epimers of NAD(P)HX, a damaged form of NAD(P)H that is a result of enzymatic or heat-dependent hydration. In Puccinia graminis f. sp. tritici (strain CRL 75-36-700-3 / race SCCL) (Black stem rust fungus), this protein is ATP-dependent (S)-NAD(P)H-hydrate dehydratase 1.